The chain runs to 387 residues: Early growth response protein 3 (387 aa).

Residues 241–283 (PGFGSLPQPPLTLKPIRPRKYPNRPSKTPLHERPHACPAEGCD) form a disordered region. Residues 269 to 283 (PLHERPHACPAEGCD) are compositionally biased toward basic and acidic residues. 3 consecutive C2H2-type zinc fingers follow at residues 275–299 (HACPAEGCDRRFSRSDELTRHLRIH), 305–327 (FQCRICMRSFSRSDHLTTHIRTH), and 333–355 (FACEFCGRKFARSDERKRHAKIH). Residues 348 to 387 (RKRHAKIHLKQKEKKAEKGGAPSASSAPPVSLAPVVTTCA) form a disordered region. Positions 350 to 360 (RHAKIHLKQKE) are enriched in basic residues. Positions 368–387 (APSASSAPPVSLAPVVTTCA) are enriched in low complexity.

The protein belongs to the EGR C2H2-type zinc-finger protein family.

It is found in the nucleus. In terms of biological role, probable transcription factor involved in muscle spindle development. The chain is Early growth response protein 3 (EGR3) from Homo sapiens (Human).